The chain runs to 464 residues: MAVYNYDVVILGTGPAGEGAAMNASKYGRKLAVVDSRRVVGGNCTHLGTIPSKALRHSVKQIIEFNTNPMFRQIGEPRWFSFPDVLKSADRVISKQVASRTGYYARNRIDMFTGTASFVDERTVEVVTPSGAVERLVADQFVIATGSRPYRPSDINFNHPRVYDSDTILSLSHTPRRLIIYGAGVIGCEYASIFSGLGVLVDLIDTRDQLLSFLDDEISDALSYHLRNNNVLIRHNEEYERVEGLDNGVILHLKSGKKIKADALLWCNGRTGNTDKLGLENVGIKVNSRGQIEVDENYRTSVSNIFAAGDVIGWPSLASAAYDQGRSAAGNIVESDSWRFVNDVPTGIYTIPEISSIGKNESELTAAKIPYEVGKAFFKGMARAQISNEPVGMLKILFHRETLEILGVHCFGDQASEIVHIGQAIMNQPGELNTLKYFVNTTFNYPTMAEAYRVAAFDGLNRLF.

An FAD-binding site is contributed by 35–44; it reads DSRRVVGGNC.

It belongs to the class-I pyridine nucleotide-disulfide oxidoreductase family. FAD is required as a cofactor.

The protein resides in the cytoplasm. The catalysed reaction is NAD(+) + NADPH = NADH + NADP(+). Its function is as follows. Conversion of NADPH, generated by peripheral catabolic pathways, to NADH, which can enter the respiratory chain for energy generation. This Pseudomonas aeruginosa (strain LESB58) protein is Soluble pyridine nucleotide transhydrogenase.